Reading from the N-terminus, the 562-residue chain is TBC1 domain family member 24 (562 aa).

Residues K36, R40, K238, R242, and 293–297 (RLFSR) each bind a 1,2-diacyl-sn-glycero-3-phospho-(1D-myo-inositol). In terms of domain architecture, Rab-GAP TBC spans 42-259 (GHWAKSHSLR…FFHKVRGGQP (218 aa)). The region spanning 337 to 549 (EIVSVKEMRD…ISIIEVWGFK (213 aa)) is the TLDc domain. Low complexity predominate over residues 451–464 (ASSGDNDANSSQSA). Residues 451–471 (ASSGDNDANSSQSAKDGIDPS) form a disordered region.

In terms of assembly, interacts with ARF6.

It is found in the cell membrane. It localises to the cytoplasm. The protein resides in the cytoplasmic vesicle membrane. Its subcellular location is the presynapse. Functionally, may act as a GTPase-activating protein for Rab family protein(s). Involved in neuronal projections development, probably through a negative modulation of ARF6 function. Involved in the regulation of synaptic vesicle trafficking. In Xenopus tropicalis (Western clawed frog), this protein is TBC1 domain family member 24 (tbc1d24).